Reading from the N-terminus, the 391-residue chain is Tyrosine recombinase XerC-like (391 aa).

In terms of domain architecture, Core-binding (CB) spans 64 to 148; sequence VTLGDLMHTW…FLKTFFNYAV (85 aa). In terms of domain architecture, Tyr recombinase spans 175-384; sequence TEIETFSDEE…IPKQKTNAVE (210 aa). Active-site residues include R210, K244, H335, R338, and H361. Y371 serves as the catalytic O-(3'-phospho-DNA)-tyrosine intermediate.

This sequence belongs to the 'phage' integrase family.

The protein localises to the cytoplasm. Functionally, site-specific tyrosine recombinase, which acts by catalyzing the cutting and rejoining of the recombining DNA molecules. The protein is Tyrosine recombinase XerC-like of Caldanaerobacter subterraneus subsp. tengcongensis (strain DSM 15242 / JCM 11007 / NBRC 100824 / MB4) (Thermoanaerobacter tengcongensis).